The primary structure comprises 100 residues: Urease subunit gamma (100 aa).

The protein belongs to the urease gamma subunit family. As to quaternary structure, heterotrimer of UreA (gamma), UreB (beta) and UreC (alpha) subunits. Three heterotrimers associate to form the active enzyme.

Its subcellular location is the cytoplasm. The enzyme catalyses urea + 2 H2O + H(+) = hydrogencarbonate + 2 NH4(+). It participates in nitrogen metabolism; urea degradation; CO(2) and NH(3) from urea (urease route): step 1/1. This is Urease subunit gamma from Methylibium petroleiphilum (strain ATCC BAA-1232 / LMG 22953 / PM1).